A 134-amino-acid chain; its full sequence is Loki profilin-2 (134 aa).

The loki loop stretch occupies residues 55–62; sequence LALGEKGI.

The protein belongs to the Asgard profilin family.

The protein resides in the cytoplasm. The protein localises to the cytoskeleton. Its activity is regulated as follows. Inhibition of rabbit actin polymerization is reduced by phosphatidylinositol-(4,5)-P2(1,2-dipalmitoyl), a soluble form of the phospholipid phosphatidylinositol, suggesting an unknown lipid might regulate actin-profilin interaction in vivo. Functionally, binds to actin and affects the structure of the cytoskeleton. At high concentrations inhibits spontaneous rabbit actin nucleation. This strongly suggests this archaea has a profilin-regulated actin system, and actin-type genes can be identified in this organism. This chain is Loki profilin-2, found in Lokiarchaeum sp. (strain GC14_75).